Reading from the N-terminus, the 538-residue chain is Sucrose transport protein SUT1 (538 aa).

The Cytoplasmic segment spans residues 1 to 52 (MARGSGAGGGGGGGGGGLELSVGVGGGGGARGGGGGEAAAAVETAAPISLGR). Residues 53–73 (LILSGMVAGGVQYGWALQLSL) traverse the membrane as a helical segment. Over 74-81 (LTPYVQTL) the chain is Extracellular. A helical transmembrane segment spans residues 82-102 (GLSHALTSFMWLCGPIAGMVV). The Cytoplasmic portion of the chain corresponds to 103–123 (QPCVGLYSDRCTSKWGRRRPY). Residues 124-144 (ILTGCVLICLAVVVIGFSADI) traverse the membrane as a helical segment. The Extracellular segment spans residues 145 to 162 (GYAMGDTKEDCSVYHGSR). A helical transmembrane segment spans residues 163-183 (WHAAIVYVLGFWLLDFSNNTV). At 184 to 198 (QGPARALMADLSGRH) the chain is on the cytoplasmic side. Residues 199–219 (GPGTANSIFCSWMAMGNILGY) form a helical membrane-spanning segment. The Extracellular segment spans residues 220–247 (SSGSTNNWHKWFPFLKTRACCEACANLK). A helical transmembrane segment spans residues 248 to 268 (GAFLVAVIFLSLCLVITLIFA). At 269 to 306 (KEVPFKGNAALPTKSNEPAEPEGTGPLAVLKGFRNLPT) the chain is on the cytoplasmic side. The helical transmembrane segment at 307-327 (GMPSVLIVTGLTWLSWFPFIL) threads the bilayer. Residues 328–357 (YDTDWMGREIYHGDPKGTDPQIEAFNQGVR) lie on the Extracellular side of the membrane. A helical membrane pass occupies residues 358 to 378 (AGAFGLLLNSIVLGFSSFLIE). Over 379–388 (PMCRKVGPRV) the chain is Cytoplasmic. Residues 389–409 (VWVTSNFLVCIAMAATALISF) traverse the membrane as a helical segment. Residues 410–433 (WSLKDFHGTVQKAITADKSIKAVC) are Extracellular-facing. Residues 434-454 (LVLFAFLGVPLAVLYSVPFAV) traverse the membrane as a helical segment. At 455–470 (TAQLAATRGGGQGLCT) the chain is on the cytoplasmic side. The helical transmembrane segment at 471–491 (GVLNISIVIPQVVIALGAGPW) threads the bilayer. Topologically, residues 492 to 499 (DELFGKGN) are extracellular. A helical transmembrane segment spans residues 500–520 (IPAFGLASGFALIGGVAGIFL). At 521–538 (LPKISKRQFRSVSMGGGH) the chain is on the cytoplasmic side.

The protein belongs to the glycoside-pentoside-hexuronide (GPH) cation symporter transporter (TC 2.A.2.4) family. Homodimer.

The protein localises to the cell membrane. The protein operates within glycan biosynthesis; sucrose metabolism. Responsible for the transport of sucrose into the cell, with the concomitant uptake of protons (symport system). May also transport other glucosides. May be required for apoplastic phloem sucrose loading in source tissues (e.g. leaves) in order to transport it to sink tissues (e.g. roots, flowers). The protein is Sucrose transport protein SUT1 (SUT1) of Oryza sativa subsp. indica (Rice).